The sequence spans 67 residues: Large ribosomal subunit protein bL31 (67 aa).

Positions 16, 18, 38, and 41 each coordinate Zn(2+).

The protein belongs to the bacterial ribosomal protein bL31 family. Type A subfamily. In terms of assembly, part of the 50S ribosomal subunit. Requires Zn(2+) as cofactor.

Binds the 23S rRNA. The polypeptide is Large ribosomal subunit protein bL31 (Thioalkalivibrio sulfidiphilus (strain HL-EbGR7)).